A 541-amino-acid polypeptide reads, in one-letter code: Chaperonin GroEL (541 aa).

Residues 29 to 32 (TLGP), 86 to 90 (DGTTT), G413, 476 to 478 (NAA), and D492 contribute to the ATP site. The tract at residues 521–541 (KPEENAPAAPAAPNPGMGGMM) is disordered. The segment covering 525-535 (NAPAAPAAPNP) has biased composition (low complexity).

This sequence belongs to the chaperonin (HSP60) family. Forms a cylinder of 14 subunits composed of two heptameric rings stacked back-to-back. Interacts with the co-chaperonin GroES.

The protein resides in the cytoplasm. The enzyme catalyses ATP + H2O + a folded polypeptide = ADP + phosphate + an unfolded polypeptide.. Functionally, together with its co-chaperonin GroES, plays an essential role in assisting protein folding. The GroEL-GroES system forms a nano-cage that allows encapsulation of the non-native substrate proteins and provides a physical environment optimized to promote and accelerate protein folding. The sequence is that of Chaperonin GroEL from Lactiplantibacillus plantarum (strain ATCC BAA-793 / NCIMB 8826 / WCFS1) (Lactobacillus plantarum).